Reading from the N-terminus, the 105-residue chain is MATGTPDSQARFGQSVKGLLTEKVNTCGTDVIALTKQVLKGSRSSELLGQAARNMVLQEDAILHSEDSLRKMAIITTHLQYQQEAIQKNVEQSSNLQDQLNHLLK.

It belongs to the BORCS7 family. In terms of assembly, component of the BLOC-one-related complex (BORC) which is composed of BLOC1S1, BLOC1S2, BORCS5, BORCS6, BORCS7, BORCS8, KXD1 and SNAPIN.

It is found in the lysosome membrane. In terms of biological role, as part of the BORC complex may play a role in lysosomes movement and localization at the cell periphery. Associated with the cytosolic face of lysosomes, the BORC complex may recruit ARL8B and couple lysosomes to microtubule plus-end-directed kinesin motor. This is BLOC-1-related complex subunit 7 from Bos taurus (Bovine).